Consider the following 772-residue polypeptide: Carnitine O-palmitoyltransferase 1, muscle isoform (772 aa).

Over 1–47 (MAEAHQAVAFQFTVTPEGVDFRLSREALKHIYLSGINSWKKRLIRIK) the chain is Cytoplasmic. Residues 48–73 (NGILRGVYPGSPTSWLVVASATAGSS) form a helical membrane-spanning segment. The Mitochondrial intermembrane segment spans residues 74-102 (YYNVDISMGLVNHIQRCLPERYGPYWTPQ). A helical membrane pass occupies residues 103-122 (TRALLSMAVVSTGVWMIGIF). The Cytoplasmic segment spans residues 123–772 (FFRQTLKLLL…DLFQVPKTDS (650 aa)). Residue His-473 is the Proton acceptor of the active site. Residue 555–567 (GKGLIKKCRTSPD) participates in CoA binding. (R)-carnitine is bound by residues Tyr-589 and Thr-602.

Belongs to the carnitine/choline acetyltransferase family.

It localises to the mitochondrion outer membrane. It catalyses the reaction (R)-carnitine + hexadecanoyl-CoA = O-hexadecanoyl-(R)-carnitine + CoA. The protein operates within lipid metabolism; fatty acid beta-oxidation. In terms of biological role, catalyzes the transfer of the acyl group of long-chain fatty acid-CoA conjugates onto carnitine, an essential step for the mitochondrial uptake of long-chain fatty acids and their subsequent beta-oxidation in the mitochondrion. This Sus scrofa (Pig) protein is Carnitine O-palmitoyltransferase 1, muscle isoform (CPT1B).